The sequence spans 361 residues: tRNA 2-selenouridine synthase (361 aa).

A Rhodanese domain is found at 12–135 (VLKNIPLIDV…FRRYLIDHLE (124 aa)). Cys95 serves as the catalytic S-selanylcysteine intermediate.

This sequence belongs to the SelU family. As to quaternary structure, monomer.

The enzyme catalyses 5-methylaminomethyl-2-thiouridine(34) in tRNA + selenophosphate + (2E)-geranyl diphosphate + H2O + H(+) = 5-methylaminomethyl-2-selenouridine(34) in tRNA + (2E)-thiogeraniol + phosphate + diphosphate. It carries out the reaction 5-methylaminomethyl-2-thiouridine(34) in tRNA + (2E)-geranyl diphosphate = 5-methylaminomethyl-S-(2E)-geranyl-thiouridine(34) in tRNA + diphosphate. It catalyses the reaction 5-methylaminomethyl-S-(2E)-geranyl-thiouridine(34) in tRNA + selenophosphate + H(+) = 5-methylaminomethyl-2-(Se-phospho)selenouridine(34) in tRNA + (2E)-thiogeraniol. The catalysed reaction is 5-methylaminomethyl-2-(Se-phospho)selenouridine(34) in tRNA + H2O = 5-methylaminomethyl-2-selenouridine(34) in tRNA + phosphate. In terms of biological role, involved in the post-transcriptional modification of the uridine at the wobble position (U34) of tRNA(Lys), tRNA(Glu) and tRNA(Gln). Catalyzes the conversion of 2-thiouridine (S2U-RNA) to 2-selenouridine (Se2U-RNA). Acts in a two-step process involving geranylation of 2-thiouridine (S2U) to S-geranyl-2-thiouridine (geS2U) and subsequent selenation of the latter derivative to 2-selenouridine (Se2U) in the tRNA chain. This Hydrogenovibrio crunogenus (strain DSM 25203 / XCL-2) (Thiomicrospira crunogena) protein is tRNA 2-selenouridine synthase.